Here is a 478-residue protein sequence, read N- to C-terminus: MADRDATLWASHEKMLSQPLKDSDAEVYSIIKKESNRQRVGLELIASENFASRAVLEALGSCLNNKYSEGYPGQRYYGGTEFIDELEMLCQKRALQAYHLDPQCWGVNVQPYSGSPANFAVYTALVEPHGRIMGLDLPDGGHLTHGFMTDKKKISATSIFFESMPYKVYPETGYINYDQLEENASLFHPKLIIAGTSCYSRNLDYARLRKIADDNGAYLMADMAHISGLVAAGVVPSPFEHCHVVTTTTHKTLRGCRAGMIFYRKGVRSVDPKTGKETYYELESLINSAVFPGLQGGPHNHAIAGVAVALKQAMTTEFKIYQLQVLANCRALSDALTELGYKIVTGGSDNHLILMDLRSKGTDGGRAEKVLEACSIACNKNTCPGDKSALRPSGLRLGTPALTSRGLLEEDFQKVAHFIHRGIELTLQIQSHMATKATLKEFKEKLAGDEKIQSAVATLREEVENFASNFSLPGLPDF.

N6-(pyridoxal phosphate)lysine is present on Lys-251.

It belongs to the SHMT family. In terms of assembly, homotetramer. Identified in complex with FAM175B and the other subunits of the BRISC complex, at least composed of FAM175B/ABRO1, BRCC3/BRCC36, BABAM2 and BABAM1/NBA1. Pyridoxal 5'-phosphate is required as a cofactor.

It localises to the cytoplasm. The catalysed reaction is (6R)-5,10-methylene-5,6,7,8-tetrahydrofolate + glycine + H2O = (6S)-5,6,7,8-tetrahydrofolate + L-serine. It participates in one-carbon metabolism; tetrahydrofolate interconversion. Its function is as follows. Interconversion of serine and glycine. The polypeptide is Serine hydroxymethyltransferase, cytosolic (Shmt1) (Mus musculus (Mouse)).